The sequence spans 424 residues: Serine--tRNA ligase (424 aa).

L-serine is bound at residue 231–233 (TAE). ATP is bound at residue 262 to 264 (RSE). Glu285 contributes to the L-serine binding site. Residue 349–352 (EISS) participates in ATP binding. Position 385 (Ser385) interacts with L-serine.

Belongs to the class-II aminoacyl-tRNA synthetase family. Type-1 seryl-tRNA synthetase subfamily. As to quaternary structure, homodimer. The tRNA molecule binds across the dimer.

The protein resides in the cytoplasm. It carries out the reaction tRNA(Ser) + L-serine + ATP = L-seryl-tRNA(Ser) + AMP + diphosphate + H(+). The catalysed reaction is tRNA(Sec) + L-serine + ATP = L-seryl-tRNA(Sec) + AMP + diphosphate + H(+). It functions in the pathway aminoacyl-tRNA biosynthesis; selenocysteinyl-tRNA(Sec) biosynthesis; L-seryl-tRNA(Sec) from L-serine and tRNA(Sec): step 1/1. In terms of biological role, catalyzes the attachment of serine to tRNA(Ser). Is also able to aminoacylate tRNA(Sec) with serine, to form the misacylated tRNA L-seryl-tRNA(Sec), which will be further converted into selenocysteinyl-tRNA(Sec). This is Serine--tRNA ligase from Bacillus cereus (strain B4264).